A 168-amino-acid polypeptide reads, in one-letter code: Diphosphoinositol polyphosphate phosphohydrolase 1 (168 aa).

Residue methionine 1 is modified to N-acetylmethionine. Substrate is bound by residues arginine 10, 18–20 (KKR), and 39–41 (SSR). The 128-residue stretch at 17–144 (YKKRAACLCF…VQASYFETLR (128 aa)) folds into the Nudix hydrolase domain. Mg(2+) is bound by residues glycine 50 and glutamate 66. The Nudix box motif lies at 51-72 (GGMEPEEEPSVAAVREVCEEAG). Residue glutamate 69 is the Proton acceptor of the active site. Glutamate 70 contacts Mg(2+). Residues 89–91 (RKH), arginine 115, and lysine 133 each bind substrate.

Belongs to the Nudix hydrolase family. DIPP subfamily. As to quaternary structure, monomer. It depends on Mg(2+) as a cofactor. Requires Mn(2+) as cofactor. Zn(2+) is required as a cofactor. In terms of tissue distribution, present in heart, lung, liver and spleen (at protein level). Widely expressed.

It localises to the cytoplasm. The protein localises to the nucleus. The catalysed reaction is diphospho-myo-inositol polyphosphate + H2O = myo-inositol polyphosphate + phosphate.. It catalyses the reaction 5-diphospho-1D-myo-inositol 1,2,3,4,6-pentakisphosphate + H2O = 1D-myo-inositol hexakisphosphate + phosphate + H(+). It carries out the reaction 3,5-bis(diphospho)-1D-myo-inositol 1,2,4,6-tetrakisphosphate + H2O = 3-diphospho-1D-myo-inositol 1,2,4,5,6-pentakisphosphate + phosphate + 2 H(+). The enzyme catalyses [phosphate](n+1) + n H2O = (n+1) phosphate + n H(+). The catalysed reaction is P(1),P(5)-bis(5'-adenosyl) pentaphosphate + H2O = ADP + ATP + 2 H(+). It catalyses the reaction P(1),P(6)-bis(5'-adenosyl) hexaphosphate + H2O = 2 ATP + 2 H(+). It carries out the reaction P(1),P(4)-bis(5'-adenosyl) tetraphosphate + H2O = AMP + ATP + 2 H(+). The enzyme catalyses a 5'-end (N(7)-methyl 5'-triphosphoguanosine)-ribonucleoside in mRNA + H2O = N(7)-methyl-GMP + a 5'-end diphospho-ribonucleoside in mRNA + 2 H(+). The catalysed reaction is a 5'-end (N(7)-methyl 5'-triphosphoguanosine)-ribonucleoside in mRNA + H2O = N(7)-methyl-GDP + a 5'-end phospho-ribonucleoside in mRNA + 2 H(+). Its function is as follows. Cleaves a beta-phosphate from the diphosphate groups in PP-InsP5 (diphosphoinositol pentakisphosphate) and [PP]2-InsP4 (bisdiphosphoinositol tetrakisphosphate), suggesting that it may play a role in signal transduction. InsP6 (inositol hexakisphosphate) is not a substrate. Also able to catalyze the hydrolysis of dinucleoside oligophosphates, with diadenosine 5',5'''-P1,P6-hexaphosphate (Ap6A) and diadenosine 5',5'''- P1,P5-pentaphosphate (Ap5A) being the preferred substrates. The major reaction products are ADP and p4a from Ap6A and ADP and ATP from Ap5A. Also able to hydrolyze 5- phosphoribose 1-diphosphate. Acts as a negative regulator of the ERK1/2 pathway. Acts as a decapping enzyme that can hydrolyze both monomethylated and unmethylated capped RNAs. Hydrolyzes monomethylated capped RNA after both the alpha- and beta-phosphates generating m7GMP + ppRNA and m7GDP + pRNA. Modulates the stability of a subset of mRNAs implicated in cell motility. Divalent cations zinc, magnesium and manganese determine its substrate specificity. Exhibits diphosphoinositol polyphosphate phosphohydrolase in the presence of magnesium ions, diadenosine hexaphosphate hydrolase activity in the presence of manganese ions and endopolyphosphatase activity in the presence of zinc ions. Plays an important role in limiting DNA damage and maintaining cell survival upon oxidative stress via its endopolyphosphatase activity. The protein is Diphosphoinositol polyphosphate phosphohydrolase 1 of Mus musculus (Mouse).